A 181-amino-acid polypeptide reads, in one-letter code: Oligoribonuclease (181 aa).

The region spanning 8–171 (LIWIDLEMTG…DDIRESVAEL (164 aa)) is the Exonuclease domain. The active site involves Y129.

Belongs to the oligoribonuclease family.

It localises to the cytoplasm. Its function is as follows. 3'-to-5' exoribonuclease specific for small oligoribonucleotides. The polypeptide is Oligoribonuclease (Shigella flexneri).